Consider the following 89-residue polypeptide: Double-stranded DNA-binding protein (89 aa).

As to quaternary structure, homodimer.

Functionally, may play a role in transcription of several T4 genes. Binds double-stranded DNA and interacts preferentially with T4 late promoter regions. The protein is Double-stranded DNA-binding protein (dsbA) of Enterobacteria phage T4 (Bacteriophage T4).